The chain runs to 311 residues: Dihydroorotate dehydrogenase A (fumarate) (311 aa).

Residues serine 19 and 43 to 44 (KS) each bind FMN. Substrate is bound by residues lysine 43, 67-71 (NSMGL), and asparagine 127. An FMN-binding site is contributed by asparagine 127. Cysteine 130 acts as the Nucleophile in catalysis. Positions 164 and 192 each coordinate FMN. 193 to 194 (NS) contributes to the substrate binding site. FMN-binding positions include glycine 221, 249–250 (GG), and 271–272 (GT).

Belongs to the dihydroorotate dehydrogenase family. Type 1 subfamily. Homodimer. FMN serves as cofactor.

Its subcellular location is the cytoplasm. It catalyses the reaction (S)-dihydroorotate + fumarate = orotate + succinate. Its pathway is pyrimidine metabolism; UMP biosynthesis via de novo pathway. Catalyzes the conversion of dihydroorotate to orotate with fumarate as the electron acceptor. The polypeptide is Dihydroorotate dehydrogenase A (fumarate) (pyrDA) (Lactococcus lactis subsp. lactis (strain IL1403) (Streptococcus lactis)).